We begin with the raw amino-acid sequence, 374 residues long: Peptidoglycan recognition protein 4 (374 aa).

A signal peptide spans 1–20 (MLSWLLVFSILVLLAQGVSS). N-linked (GlcNAc...) asparagine glycosylation is found at N39, N93, and N146. N-acetylmuramoyl-L-alanine amidase domains lie at 76 to 212 (RPVD…KACP) and 233 to 359 (PAKY…LSPG). 3 disulfides stabilise this stretch: C211/C333, C227/C271, and C247/C253. Y275 contacts peptidoglycan. Interaction with murein stretches follow at residues 294-303 (QGSKTDSYND) and 354-355 (NT).

The protein belongs to the N-acetylmuramoyl-L-alanine amidase 2 family. Homodimer; disulfide-linked. Heterodimer with PGLYRP3; disulfide-linked. As to expression, ubiquitous.

The protein resides in the secreted. Functionally, pattern receptor that binds to murein peptidoglycans (PGN) of Gram-positive bacteria. Has bactericidal activity towards Gram-positive bacteria. May kill Gram-positive bacteria by interfering with peptidoglycan biosynthesis. Also binds to Gram-negative bacteria, and has bacteriostatic activity towards Gram-negative bacteria. Plays a role in innate immunity. In Mus musculus (Mouse), this protein is Peptidoglycan recognition protein 4 (Pglyrp4).